The sequence spans 111 residues: Protein BEX3 (111 aa).

The tract at residues methionine 1–aspartate 63 is disordered. The interval glutamate 68–leucine 93 is interaction with p75NTR/NGFR. The interaction with 14-3-3 epsilon stretch occupies residues glutamate 68 to proline 111. Positions isoleucine 77–arginine 87 match the Nuclear export signal motif. The segment at histidine 100–histidine 104 is his cluster. Cysteine 108 is a Zn(2+) binding site.

It belongs to the BEX family. As to quaternary structure, self-associates. Binds to the DEATH domain of p75NTR/NGFR. Interacts with 14-3-3 epsilon (YWHAE). Interacts with DIABLO/SMAC. Ubiquitinated. Degraded by the proteasome. As to expression, found in ovarian granulosa cells, testis, prostate and seminal vesicle tissue. High levels also detected in liver.

It is found in the nucleus. It localises to the cytoplasm. Its subcellular location is the cytosol. In terms of biological role, may be a signaling adapter molecule involved in NGFR/p75NTR-mediated apoptosis induced by NGF. Plays a role in zinc-triggered neuronal death. In absence of reductive stress, acts as a pseudosubstrate for the CRL2(FEM1B) complex: associates with FEM1B via zinc, thereby preventing association between FEM1B and its substrates. In Homo sapiens (Human), this protein is Protein BEX3.